An 892-amino-acid chain; its full sequence is Protein RRP6-like 3 (892 aa).

Positions 119–287 (YVWVETESQL…IADSLTTELK (169 aa)) constitute a 3'-5' exonuclease domain. The HRDC domain maps to 350-436 (SLNAEELVRK…CSHLDDIYKM (87 aa)). The segment at 785-811 (VDDSGDGTSEGDGAKELNDTQCNGNTL) is disordered.

Its subcellular location is the cytoplasm. The protein resides in the cytosol. This Arabidopsis thaliana (Mouse-ear cress) protein is Protein RRP6-like 3.